The primary structure comprises 155 residues: Peptidyl-prolyl cis-trans isomerase ppi1 (155 aa).

The PPIase cyclophilin-type domain occupies 1–154 (MANVELQTSL…EPLKIIKAVA (154 aa)).

It belongs to the cyclophilin-type PPIase family. PPIL1 subfamily. In terms of assembly, interacts with cwf13/snw1.

It carries out the reaction [protein]-peptidylproline (omega=180) = [protein]-peptidylproline (omega=0). PPIases accelerate the folding of proteins. It catalyzes the cis-trans isomerization of proline imidic peptide bonds in oligopeptides. In Schizosaccharomyces pombe (strain 972 / ATCC 24843) (Fission yeast), this protein is Peptidyl-prolyl cis-trans isomerase ppi1 (ppi1).